Reading from the N-terminus, the 913-residue chain is Bifunctional uridylyltransferase/uridylyl-removing enzyme (913 aa).

Positions Met1–Pro358 are uridylyltransferase. A uridylyl-removing region spans residues Ile359–Val729. The 117-residue stretch at Val476 to Val592 folds into the HD domain. ACT domains are found at residues Gln730–Arg815 and Ile838–Val913.

This sequence belongs to the GlnD family. It depends on Mg(2+) as a cofactor.

The catalysed reaction is [protein-PII]-L-tyrosine + UTP = [protein-PII]-uridylyl-L-tyrosine + diphosphate. The enzyme catalyses [protein-PII]-uridylyl-L-tyrosine + H2O = [protein-PII]-L-tyrosine + UMP + H(+). Uridylyltransferase (UTase) activity is inhibited by glutamine, while glutamine activates uridylyl-removing (UR) activity. Functionally, modifies, by uridylylation and deuridylylation, the PII regulatory proteins (GlnB and homologs), in response to the nitrogen status of the cell that GlnD senses through the glutamine level. Under low glutamine levels, catalyzes the conversion of the PII proteins and UTP to PII-UMP and PPi, while under higher glutamine levels, GlnD hydrolyzes PII-UMP to PII and UMP (deuridylylation). Thus, controls uridylylation state and activity of the PII proteins, and plays an important role in the regulation of nitrogen assimilation and metabolism. The chain is Bifunctional uridylyltransferase/uridylyl-removing enzyme from Psychrobacter cryohalolentis (strain ATCC BAA-1226 / DSM 17306 / VKM B-2378 / K5).